We begin with the raw amino-acid sequence, 83 residues long: Small ribosomal subunit protein bS16 (83 aa).

This sequence belongs to the bacterial ribosomal protein bS16 family.

The polypeptide is Small ribosomal subunit protein bS16 (Herminiimonas arsenicoxydans).